Here is a 103-residue protein sequence, read N- to C-terminus: MAKFIRNFAEKAPSMVAAAVTYSKPRLATFWHYAKVELVPPTPAEIPTAIQSVKKIIQSAKTGSFKHLTVKEAVLNGLVATEVWMWFYIGEIIGKRGIVGYDV.

Ala-2 bears the N-acetylalanine mark. N6-acetyllysine occurs at positions 11, 24, 35, and 54.

Belongs to the ATPase g subunit family. Component of the ATP synthase complex composed at least of ATP5F1A/subunit alpha, ATP5F1B/subunit beta, ATP5MC1/subunit c (homooctomer), MT-ATP6/subunit a, MT-ATP8/subunit 8, ATP5ME/subunit e, ATP5MF/subunit f, ATP5MG/subunit g, ATP5MK/subunit k, ATP5MJ/subunit j, ATP5F1C/subunit gamma, ATP5F1D/subunit delta, ATP5F1E/subunit epsilon, ATP5PF/subunit F6, ATP5PB/subunit b, ATP5PD/subunit d, ATP5PO/subunit OSCP. ATP synthase complex consists of a soluble F(1) head domain (subunits alpha(3) and beta(3)) - the catalytic core - and a membrane F(0) domain - the membrane proton channel (subunits c, a, 8, e, f, g, k and j). These two domains are linked by a central stalk (subunits gamma, delta, and epsilon) rotating inside the F1 region and a stationary peripheral stalk (subunits F6, b, d, and OSCP).

It localises to the mitochondrion. The protein resides in the mitochondrion inner membrane. Its function is as follows. Subunit g, of the mitochondrial membrane ATP synthase complex (F(1)F(0) ATP synthase or Complex V) that produces ATP from ADP in the presence of a proton gradient across the membrane which is generated by electron transport complexes of the respiratory chain. ATP synthase complex consist of a soluble F(1) head domain - the catalytic core - and a membrane F(1) domain - the membrane proton channel. These two domains are linked by a central stalk rotating inside the F(1) region and a stationary peripheral stalk. During catalysis, ATP synthesis in the catalytic domain of F(1) is coupled via a rotary mechanism of the central stalk subunits to proton translocation. In vivo, can only synthesize ATP although its ATP hydrolase activity can be activated artificially in vitro. Part of the complex F(0) domain. The sequence is that of ATP synthase F(0) complex subunit g, mitochondrial from Mus musculus (Mouse).